Consider the following 277-residue polypeptide: Translation initiation factor 2 subunit alpha (277 aa).

The S1 motif domain maps to G22–K93.

Belongs to the eIF-2-alpha family. As to quaternary structure, heterotrimer composed of an alpha, a beta and a gamma chain.

Functionally, eIF-2 functions in the early steps of protein synthesis by forming a ternary complex with GTP and initiator tRNA. This Aeropyrum pernix (strain ATCC 700893 / DSM 11879 / JCM 9820 / NBRC 100138 / K1) protein is Translation initiation factor 2 subunit alpha (eif2a).